Reading from the N-terminus, the 333-residue chain is Biotin synthase (333 aa).

The 230-residue stretch at 47 to 276 (YYGKKVKLNM…TKEIRISGGR (230 aa)) folds into the Radical SAM core domain. [4Fe-4S] cluster-binding residues include Cys65, Cys69, and Cys72. Cys109, Cys141, Cys201, and Arg271 together coordinate [2Fe-2S] cluster.

Belongs to the radical SAM superfamily. Biotin synthase family. Homodimer. It depends on [4Fe-4S] cluster as a cofactor. The cofactor is [2Fe-2S] cluster.

The enzyme catalyses (4R,5S)-dethiobiotin + (sulfur carrier)-SH + 2 reduced [2Fe-2S]-[ferredoxin] + 2 S-adenosyl-L-methionine = (sulfur carrier)-H + biotin + 2 5'-deoxyadenosine + 2 L-methionine + 2 oxidized [2Fe-2S]-[ferredoxin]. Its pathway is cofactor biosynthesis; biotin biosynthesis; biotin from 7,8-diaminononanoate: step 2/2. Catalyzes the conversion of dethiobiotin (DTB) to biotin by the insertion of a sulfur atom into dethiobiotin via a radical-based mechanism. The chain is Biotin synthase from Bacillus licheniformis (strain ATCC 14580 / DSM 13 / JCM 2505 / CCUG 7422 / NBRC 12200 / NCIMB 9375 / NCTC 10341 / NRRL NRS-1264 / Gibson 46).